The primary structure comprises 61 residues: Small ribosomal subunit protein uS14 (61 aa).

The Zn(2+) site is built by cysteine 24, cysteine 27, cysteine 40, and cysteine 43.

Belongs to the universal ribosomal protein uS14 family. Zinc-binding uS14 subfamily. As to quaternary structure, part of the 30S ribosomal subunit. Contacts proteins S3 and S10. The cofactor is Zn(2+).

In terms of biological role, binds 16S rRNA, required for the assembly of 30S particles and may also be responsible for determining the conformation of the 16S rRNA at the A site. This is Small ribosomal subunit protein uS14 from Geobacillus thermodenitrificans (strain NG80-2).